Reading from the N-terminus, the 327-residue chain is Thiamine-binding periplasmic protein (327 aa).

The N-terminal stretch at 1 to 18 (MLKKYLPLLLLCAAPAFA) is a signal peptide. Residues 59–60 (DG), 161–162 (ST), tryptophan 197, and 215–218 (YTTS) each bind thiamine.

The protein belongs to the bacterial solute-binding protein 1 family. As to quaternary structure, the complex is composed of two ATP-binding proteins (ThiQ), two transmembrane proteins (ThiP) and a solute-binding protein (ThiB).

It is found in the periplasm. Part of the ABC transporter complex ThiBPQ involved in thiamine import. Is also involved in thiamine pyrophosphate transport. In Salmonella typhimurium (strain LT2 / SGSC1412 / ATCC 700720), this protein is Thiamine-binding periplasmic protein.